We begin with the raw amino-acid sequence, 145 residues long: Cell wall teichoic acid glycosylation protein GtcA (145 aa).

4 helical membrane passes run 21–41 (ILMY…TFWL), 52–69 (IANT…YFSN), 96–116 (FLTY…LSIN), and 121–141 (KIWT…WIIF).

It belongs to the GtrA family.

The protein localises to the cell membrane. In terms of biological role, involved in the decoration of cell wall teichoic acid with galactose and glucose. This chain is Cell wall teichoic acid glycosylation protein GtcA (gtcA), found in Listeria monocytogenes serovar 1/2a (strain ATCC BAA-679 / EGD-e).